The chain runs to 924 residues: Phosphatidate phosphatase LPIN1 (924 aa).

Residues 1–108 (MNYVGQLAGQ…IPMYLATSPI (108 aa)) form an N-LIP region. Phosphoserine is present on residues serine 106 and serine 150. Disordered regions lie at residues 133-248 (PTTA…DCQR) and 269-297 (FHAS…ADRL). The span at 152–161 (GKKRRKRRRK) shows a compositional bias: basic residues. A Nuclear localization signal motif is present at residues 153–158 (KKRRKR). The segment covering 162 to 172 (AQLDNLKRDDN) has biased composition (basic and acidic residues). The span at 176–193 (SEDEDMFPIEMSSDEDTA) shows a compositional bias: acidic residues. Composition is skewed to polar residues over residues 218-229 (PSISTHPQSASY) and 273-284 (ESPSGSRPSTPK). Serine 285, serine 287, and serine 293 each carry phosphoserine. A compositionally biased stretch (basic and acidic residues) spans 285-297 (SDSELVSKSADRL). Threonine 298 carries the post-translational modification Phosphothreonine. Disordered regions lie at residues 314-426 (QAAK…SRHL) and 446-490 (LYFP…STSD). Serine 328 bears the Phosphoserine mark. Positions 343–358 (AIHSESSDTFSDQSPT) are enriched in polar residues. Position 392 is a phosphoserine (serine 392). Residues 404–413 (NTAQSSSKTD) are compositionally biased toward polar residues. Lysine 459 carries the N6-acetyllysine modification. Polar residues predominate over residues 461-476 (ASDNGARSANQSPQSV). 3 positions are modified to phosphoserine: serine 468, serine 472, and serine 483. Residues lysine 599 and lysine 629 each participate in a glycyl lysine isopeptide (Lys-Gly) (interchain with G-Cter in SUMO) cross-link. A disordered region spans residues 627 to 649 (RIKHESSSSDEEHAAAKPSGSSH). The segment covering 628–641 (IKHESSSSDEEHAA) has biased composition (basic and acidic residues). At lysine 629 the chain carries N6-acetyllysine. 2 positions are modified to phosphoserine: serine 634 and serine 635. The segment at 658–864 (YKKTLRLTSE…VNPKGELVQE (207 aa)) is C-LIP. A DXDXT motif motif is present at residues 712–716 (DIDGT). Positions 723–727 (LGHIL) match the LXXIL motif motif. Residues serine 921 and serine 923 each carry the phosphoserine modification.

It belongs to the lipin family. As to quaternary structure, interacts (via LXXIL motif) with PPARA. Interacts with PPARGC1A. Interaction with PPARA and PPARGC1A leads to the formation of a complex that modulates gene transcription. Interacts with MEF2C. Mg(2+) serves as cofactor. Phosphorylated at multiple sites in response to insulin. Phosphorylation is controlled by the mTOR signaling pathway. Phosphorylation is decreased by epinephrine. Phosphorylation may not directly affect the catalytic activity but may regulate the localization. Dephosphorylated by the CTDNEP1-CNEP1R1 complex. Post-translationally, phosphorylated at multiple sites by mTOR in response to insulin, leading to its inactivation. Phosphorylation does not affect the catalytic activity but regulates the localization. Phosphorylation is decreased by epinephrine. Dephosphorylated by the CTDNEP1-CNEP1R1 complex. Dephosphorylation following mTOR inhibition promotes its activity. In terms of processing, sumoylation is important in brain and is marginal in other tissues. Sumoylation facilitates nuclear localization of isoform 2 in neuronals cells and its transcriptional coactivator activity. Acetylation at Lys-459 and Lys-629 by KAT5 in response to fatty acids promotes translocation to the endoplasmic reticulum and synthesis of diacylglycerol. Specifically expressed in skeletal muscle. Also expressed prominently in adipose tissue, and testis. Lower expression also detected in kidney, lung, brain and liver. As to expression, predominant isoform in the liver. In terms of tissue distribution, predominant isoform in the brain.

The protein resides in the mitochondrion outer membrane. It is found in the cytoplasm. It localises to the nucleus membrane. Its subcellular location is the nucleus. The protein localises to the endoplasmic reticulum membrane. The catalysed reaction is a 1,2-diacyl-sn-glycero-3-phosphate + H2O = a 1,2-diacyl-sn-glycerol + phosphate. It carries out the reaction 1-octadecanoyl-2-(4Z,7Z,10Z,13Z,16Z,19Z-docosahexaenoyl)-sn-glycero-3-phosphate + H2O = 1-octadecanoyl-2-(4Z,7Z,10Z,13Z,16Z,19Z-docosahexaenoyl)-sn-glycerol + phosphate. It catalyses the reaction 1-octadecanoyl-2-(5Z,8Z,11Z,14Z-eicosatetraenoyl)-sn-glycero-3-phosphate + H2O = 1-octadecanoyl-2-(5Z,8Z,11Z,14Z-eicosatetraenoyl)-sn-glycerol + phosphate. The enzyme catalyses 1-octadecanoyl-2-(9Z,12Z-octadecadienoyl)-sn-glycero-3-phosphate + H2O = 1-octadecanoyl-2-(9Z,12Z)-octadecadienoyl-sn-glycerol + phosphate. The catalysed reaction is 1-octadecanoyl-2-(9Z-octadecenoyl)-sn-glycero-3-phosphate + H2O = 1-octadecanoyl-2-(9Z-octadecenoyl)-sn-glycerol + phosphate. It carries out the reaction 1-hexadecanoyl-2-(4Z,7Z,10Z,13Z,16Z,19Z-docosahexaenoyl)-sn-glycero-3-phosphate + H2O = 1-hexadecanoyl-2-(4Z,7Z,10Z,13Z,16Z,19Z-docosahexaenoyl)-sn-glycerol + phosphate. It catalyses the reaction 1,2-dioctadecanoyl-sn-glycero-3-phosphate + H2O = 1,2-dioctadecanoyl-sn-glycerol + phosphate. The enzyme catalyses 1-hexadecanoyl-2-(5Z,8Z,11Z,14Z-eicosatetraenoyl)-sn-glycero-3-phosphate + H2O = 1-hexadecanoyl-2-(5Z,8Z,11Z,14Z-eicosatetraenoyl)-sn-glycerol + phosphate. The catalysed reaction is 1-hexadecanoyl-2-(9Z,12Z-octadecadienoyl)-sn-glycero-3-phosphate + H2O = 1-hexadecanoyl-2-(9Z,12Z-octadecadienoyl)-sn-glycerol + phosphate. It carries out the reaction 1-hexadecanoyl-2-(9Z-octadecenoyl)-sn-glycero-3-phosphate + H2O = 1-hexadecanoyl-2-(9Z-octadecenoyl)-sn-glycerol + phosphate. It catalyses the reaction 1,2-di-(4Z,7Z,10Z,13Z,16Z,19Z-docosahexaenoyl)-sn-glycero-3-phosphate + H2O = 1,2-di-(4Z,7Z,10Z,13Z,16Z,19Z-docosahexaenoyl)-sn-glycerol + phosphate. The enzyme catalyses 1,2-di-(5Z,8Z,11Z,14Z)-eicosatetraenoyl-sn-glycero-3-phosphate + H2O = 1,2-di-(5Z,8Z,11Z,14Z)-eicosatetraenoyl-sn-glycerol + phosphate. The catalysed reaction is 1,2-di-(9Z,12Z-octadecadienoyl)-sn-glycero-3-phosphate + H2O = 1,2-di-(9Z,12Z-octadecadienoyl)-sn-glycerol + phosphate. It carries out the reaction 1,2-di-(9Z-octadecenoyl)-sn-glycero-3-phosphate + H2O = 1,2-di-(9Z-octadecenoyl)-sn-glycerol + phosphate. It catalyses the reaction 1,2-dihexadecanoyl-sn-glycero-3-phosphate + H2O = 1,2-dihexadecanoyl-sn-glycerol + phosphate. Its activity is regulated as follows. Inhibited by N-ethylmaleimide treatment. Its function is as follows. Acts as a magnesium-dependent phosphatidate phosphatase enzyme which catalyzes the conversion of phosphatidic acid to diacylglycerol during triglyceride, phosphatidylcholine and phosphatidylethanolamine biosynthesis and therefore controls the metabolism of fatty acids at different levels. Is involved in adipocyte differentiation. Also acts as nuclear transcriptional coactivator for PPARGC1A/PPARA regulatory pathway to modulate lipid metabolism gene expression. In terms of biological role, recruited at the mitochondrion outer membrane and is involved in mitochondrial fission by converting phosphatidic acid to diacylglycerol. This Mus musculus (Mouse) protein is Phosphatidate phosphatase LPIN1 (Lpin1).